The chain runs to 114 residues: NADH-ubiquinone oxidoreductase chain 3 (114 aa).

Transmembrane regions (helical) follow at residues 1–21 (MIFY…MLFF), 55–75 (FFFV…ILPF), and 85–105 (MFVF…LYEF).

The protein belongs to the complex I subunit 3 family.

The protein resides in the mitochondrion membrane. The catalysed reaction is a ubiquinone + NADH + 5 H(+)(in) = a ubiquinol + NAD(+) + 4 H(+)(out). Functionally, core subunit of the mitochondrial membrane respiratory chain NADH dehydrogenase (Complex I) that is believed to belong to the minimal assembly required for catalysis. Complex I functions in the transfer of electrons from NADH to the respiratory chain. The immediate electron acceptor for the enzyme is believed to be ubiquinone. The protein is NADH-ubiquinone oxidoreductase chain 3 (ND3) of Rhipicephalus sanguineus (Brown dog tick).